The primary structure comprises 148 residues: Proline-rich protein 13 (148 aa).

The disordered stretch occupies residues 1–148 (MWNPNAGQPG…SSSSSSSDSD (148 aa)). Composition is skewed to pro residues over residues 27–67 (AHPP…PQPG) and 75–93 (GPYP…PVNP). A compositionally biased stretch (basic residues) spans 109 to 135 (MQKKMKKAHKKMHKHQKHHKYHKHGKH). A compositionally biased stretch (low complexity) spans 136-148 (SSSSSSSSSSDSD).

The protein localises to the nucleus. Its function is as follows. Negatively regulates TSP1 expression at the level of transcription. This down-regulation was shown to reduce taxane-induced apoptosis. The protein is Proline-rich protein 13 (PRR13) of Homo sapiens (Human).